Reading from the N-terminus, the 120-residue chain is NAD(P)H-quinone oxidoreductase subunit 3, chloroplastic (120 aa).

Helical transmembrane passes span 11-31 (VVFF…SKLI), 65-85 (FALI…WAIV), and 89-109 (LGIT…IGLV).

Belongs to the complex I subunit 3 family. In terms of assembly, NDH is composed of at least 16 different subunits, 5 of which are encoded in the nucleus.

The protein localises to the plastid. It is found in the chloroplast thylakoid membrane. The enzyme catalyses a plastoquinone + NADH + (n+1) H(+)(in) = a plastoquinol + NAD(+) + n H(+)(out). It carries out the reaction a plastoquinone + NADPH + (n+1) H(+)(in) = a plastoquinol + NADP(+) + n H(+)(out). In terms of biological role, NDH shuttles electrons from NAD(P)H:plastoquinone, via FMN and iron-sulfur (Fe-S) centers, to quinones in the photosynthetic chain and possibly in a chloroplast respiratory chain. The immediate electron acceptor for the enzyme in this species is believed to be plastoquinone. Couples the redox reaction to proton translocation, and thus conserves the redox energy in a proton gradient. This chain is NAD(P)H-quinone oxidoreductase subunit 3, chloroplastic, found in Mesostigma viride (Green alga).